The chain runs to 343 residues: Aspartate carbamoyltransferase catalytic subunit (343 aa).

Residues R91 and T92 each contribute to the carbamoyl phosphate site. Residue K119 participates in L-aspartate binding. Carbamoyl phosphate is bound by residues R141, H171, and Q174. R204 and R259 together coordinate L-aspartate. 2 residues coordinate carbamoyl phosphate: G300 and P301.

Belongs to the aspartate/ornithine carbamoyltransferase superfamily. ATCase family. Heterododecamer (2C3:3R2) of six catalytic PyrB chains organized as two trimers (C3), and six regulatory PyrI chains organized as three dimers (R2).

The catalysed reaction is carbamoyl phosphate + L-aspartate = N-carbamoyl-L-aspartate + phosphate + H(+). It functions in the pathway pyrimidine metabolism; UMP biosynthesis via de novo pathway; (S)-dihydroorotate from bicarbonate: step 2/3. Its function is as follows. Catalyzes the condensation of carbamoyl phosphate and aspartate to form carbamoyl aspartate and inorganic phosphate, the committed step in the de novo pyrimidine nucleotide biosynthesis pathway. The chain is Aspartate carbamoyltransferase catalytic subunit from Burkholderia mallei (strain NCTC 10247).